Here is a 236-residue protein sequence, read N- to C-terminus: 7-cyano-7-deazaguanine synthase (236 aa).

Cys-7–Ala-17 is a binding site for ATP. Zn(2+)-binding residues include Cys-185, Cys-193, Cys-196, and Cys-199.

Belongs to the QueC family. Zn(2+) is required as a cofactor.

It carries out the reaction 7-carboxy-7-deazaguanine + NH4(+) + ATP = 7-cyano-7-deazaguanine + ADP + phosphate + H2O + H(+). Its pathway is purine metabolism; 7-cyano-7-deazaguanine biosynthesis. In terms of biological role, catalyzes the ATP-dependent conversion of 7-carboxy-7-deazaguanine (CDG) to 7-cyano-7-deazaguanine (preQ(0)). The sequence is that of 7-cyano-7-deazaguanine synthase from Rhizobium rhizogenes (strain K84 / ATCC BAA-868) (Agrobacterium radiobacter).